The primary structure comprises 37 residues: Alpha-conotoxin-like Kn1.2 (37 aa).

Over residues 1 to 15 (ESDGAHAKARADKPA) the composition is skewed to basic and acidic residues. Residues 1-22 (ESDGAHAKARADKPARSATNRQ) constitute a propeptide that is removed on maturation. A disordered region spans residues 1 to 23 (ESDGAHAKARADKPARSATNRQP). Intrachain disulfides connect cysteine 25/cysteine 31 and cysteine 26/cysteine 36. Residue cysteine 36 is modified to Cysteine amide.

Belongs to the conotoxin A superfamily. In terms of tissue distribution, expressed by the venom duct.

Its subcellular location is the secreted. In terms of biological role, alpha-conotoxins act on postsynaptic membranes, they bind to the nicotinic acetylcholine receptors (nAChR) and thus inhibit them. This toxin inhibits high voltage-activated (HVA) calcium channel currents in rat DRG neurons (13% inhibition at 1 uM toxin) probably by activating GABA(B) receptors (GABBR1 and/or GABBR2). In Conus kinoshitai (Kinoshita's cone), this protein is Alpha-conotoxin-like Kn1.2.